The primary structure comprises 657 residues: Protein translocase subunit SecA 2 (657 aa).

Residues Gln-93, 111–115 (GEGKT), and Asp-531 contribute to the ATP site.

The protein belongs to the SecA family. In terms of assembly, monomer and homodimer. Part of the essential Sec protein translocation apparatus which comprises SecA, SecYEG and auxiliary proteins SecDF. Other proteins may also be involved.

It localises to the cell inner membrane. The protein localises to the cytoplasm. The catalysed reaction is ATP + H2O + cellular proteinSide 1 = ADP + phosphate + cellular proteinSide 2.. In terms of biological role, part of the Sec protein translocase complex. Interacts with the SecYEG preprotein conducting channel. Has a central role in coupling the hydrolysis of ATP to the transfer of proteins into and across the cell membrane, serving as an ATP-driven molecular motor driving the stepwise translocation of polypeptide chains across the membrane. The protein is Protein translocase subunit SecA 2 of Rhodopirellula baltica (strain DSM 10527 / NCIMB 13988 / SH1).